Here is a 1586-residue protein sequence, read N- to C-terminus: COP1-interactive protein 1 (1586 aa).

The NAB domain occupies 10–84 (LKSFFEPHFD…RQYDDLTGEI (75 aa)). Residues 88–119 (VNGKGESSSSSSSDSDSDHSSKRKVKRNGNGK) are disordered. Coiled-coil stretches lie at residues 128-411 (TGAL…LKES), 437-1196 (ASEL…LKEE), 1225-1336 (LETL…TEAT), and 1372-1406 (MESL…SNQK). LRR repeat units follow at residues 173–187 (SEEI…TEKL), 188–210 (EDEK…VAGK), 216–239 (NQKL…GIKR), 261–285 (TSNL…MNSA), and 287–309 (EENK…GQTT). Positions 249 to 262 (DWKTTSDQLKDETS) are enriched in basic and acidic residues. A disordered region spans residues 249–286 (DWKTTSDQLKDETSNLKQQLEASEQRVSELTSGMNSAE). The tract at residues 325–353 (KEKESEHSSLVELHKTHERESSSQVKELE) is disordered. LRR repeat units lie at residues 384-410 (IAEL…QLKE), 437-461 (ASEL…LKAA), 473-498 (VETM…KLKD), 560-586 (IAEL…QLKE), 613-637 (VSEL…LKDA), 649-674 (LEIM…ELKD), 768-792 (LSEL…LNAA), 824-850 (LAES…AHKR), 856-880 (VKEL…LNSS), 902-929 (ESTI…LFSL), 944-968 (LRGL…LKAA), 990-1014 (QIMV…ESKL), 1077-1101 (ISEL…LEDN), 1120-1144 (RAEL…SEEA), 1195-1220 (EEII…KIKG), 1247-1272 (VQMH…NLKN), 1372-1396 (MESL…ISNI), 1398-1417 (VKLR…LTEK), 1426-1448 (AKHL…TYRG), and 1450-1474 (IKEI…LTEK). The disordered stretch occupies residues 430 to 456 (QRDSSTRASELEAQLESSKQQVSDLSA). A compositionally biased stretch (polar residues) spans 444–455 (LESSKQQVSDLS). Residues 965-985 (LKAAEEESRTMSTKISETSDE) are disordered. A coiled-coil region spans residues 1496–1530 (VIERNHEKEKMNKEIEKKDEEIKKLGGKVREDEKE).

As to quaternary structure, interacts with COP1 coiled-coil region. In terms of tissue distribution, mainly expressed in photosynthetic and vascular tissues. Accumulates in both dark-grown and light-grown seedlings roots and shoots, leaves and flowers (at protein level).

The protein localises to the cell membrane. It is found in the cytoplasm. It localises to the cytoskeleton. In terms of biological role, positive regulator of abscisic acid (ABA)-mediated signaling pathways involved in abiotic stress responses (e.g. osmotic stress) and leading to various plant adaptation (e.g. stomata closure). The polypeptide is COP1-interactive protein 1 (Arabidopsis thaliana (Mouse-ear cress)).